The following is a 142-amino-acid chain: Small ribosomal subunit protein uS12 (142 aa).

The segment at methionine 1–glutamine 44 is disordered. A compositionally biased stretch (basic residues) spans alanine 7 to glutamine 16. Positions glutamine 17–proline 38 are enriched in basic and acidic residues.

The protein belongs to the universal ribosomal protein uS12 family. As to quaternary structure, part of the 30S ribosomal subunit.

Its function is as follows. With S4 and S5 plays an important role in translational accuracy. Located at the interface of the 30S and 50S subunits. The protein is Small ribosomal subunit protein uS12 of Halobacterium salinarum (strain ATCC 29341 / DSM 671 / R1).